A 443-amino-acid chain; its full sequence is MFLAQEIIRKKRNGLALSAEEIQFFVKGITTNAVSEGQIAALGMAVYFNDMNMDERIALTTAMRDSGTVLNWQSLGLNGPVIDKHSTGGVGDVISLMLGPMAAACGGYVPMISGRGLGHTGGTLDKFDAIPGYQTEPSSELFRKVVKDVGVAIIGQTGDLVPADKRFYSIRDNTATVESISLITASILSKKLACSLDALAMDVKVGSGAFMPTYEASEELARSIAAVANGAGTKTTALLTDMNQVLASCAGNAVEVKEAIDFLTGAYRNPRLYAVTMGLCAEMLLLGGLATDEADARAKLNRVLDNGRAAEIFGKMVSGLGGPVDFVENYSKYLPQSQIIRPVFADTQGYAHSMDTRELGLAVVTLGGGRRKPGDALDYSVGLTQVCALGDKIDASTPIAVIHAQSEDAFAQAEEAVKKAIRIDEVAPEKTPEIYAYIRAADL.

The protein belongs to the thymidine/pyrimidine-nucleoside phosphorylase family. Homodimer.

The catalysed reaction is thymidine + phosphate = 2-deoxy-alpha-D-ribose 1-phosphate + thymine. The protein operates within pyrimidine metabolism; dTMP biosynthesis via salvage pathway; dTMP from thymine: step 1/2. In terms of biological role, the enzymes which catalyze the reversible phosphorolysis of pyrimidine nucleosides are involved in the degradation of these compounds and in their utilization as carbon and energy sources, or in the rescue of pyrimidine bases for nucleotide synthesis. This is Thymidine phosphorylase from Shewanella sp. (strain MR-4).